A 310-amino-acid polypeptide reads, in one-letter code: Glutaminase 1 (310 aa).

Positions 66, 117, 161, 168, 192, 244, and 262 each coordinate substrate. K294 carries the N6-acetyllysine modification.

It belongs to the glutaminase family. In terms of assembly, homotetramer.

The catalysed reaction is L-glutamine + H2O = L-glutamate + NH4(+). The chain is Glutaminase 1 from Escherichia coli O157:H7.